Reading from the N-terminus, the 392-residue chain is PMA1 stabilization in the Golgi protein 1 (392 aa).

The N-terminal stretch at 1-22 (MRFHDSILIFFSLASLYQHVHG) is a signal peptide. Thr34 and Thr35 each carry an O-linked (Man) threonine glycan. The O-linked (Man) serine glycan is linked to Ser36. Thr45 carries O-linked (Man) threonine glycosylation. O-linked (Man) serine glycosylation occurs at Ser49. Residues Thr55, Thr57, and Thr63 are each glycosylated (O-linked (Man) threonine). An O-linked (Man) serine glycan is attached at Ser65. Thr71 carries an O-linked (Man) threonine glycan. Ser80 carries O-linked (Man) serine glycosylation. O-linked (Man) threonine glycosylation is found at Thr89 and Thr99. O-linked (Man) serine glycosylation occurs at Ser107. O-linked (Man) threonine glycosylation is found at Thr108 and Thr112. 2 O-linked (Man) serine glycosylation sites follow: Ser114 and Ser115. An O-linked (Man) threonine glycan is attached at Thr117. 2 O-linked (Man) serine glycosylation sites follow: Ser119 and Ser148. Thr156 carries O-linked (Man) threonine glycosylation. O-linked (Man) serine glycosylation is present at Ser171. Thr176 is a glycosylation site (O-linked (Man) threonine). A glycan (O-linked (Man) serine) is linked at Ser181. O-linked (Man) threonine glycans are attached at residues Thr188, Thr192, Thr195, and Thr199. Residues Ser203 and Ser215 are each glycosylated (O-linked (Man) serine). The Lumenal segment spans residues 230–317 (DIPATFFSSE…DAGITNDQWY (88 aa)). The chain crosses the membrane as a helical span at residues 318-338 (YVALSIPTVVVVFFVFMYFFL). Over 339–392 (YVNGKNRDFTDVTRKALNKKRRVLGKFSEMKKFKNMKNHKYTELPSYKKTSKQN) the chain is Cytoplasmic.

Interacts with EXP1. PSG1-N' interacts with ERAD-related proteins involved in PMA1 quality control including EPS1, CDC48, UBX2 and SSM4. PSG1-C' interacts with the TLG1/2 SNARE complex proteins TLG1, TLG2 and VTI1. The precursor protein is cleaved into two polypeptide chains, PSG1-N' and PSG1-C'. The cleavage is performed in the Golgi apparatus by Ca(+)-dependent serine protease KEX2 between Arg-229 and Asp-230. In terms of processing, PSG1-N' is highly O-mannosylated.

It is found in the golgi apparatus lumen. The protein localises to the cytoplasmic vesicle. Its subcellular location is the COPI-coated vesicle membrane. In terms of biological role, with EXP1, the specific cargo receptor protein for the plasma membrane ATPase PMA1, is involved in the transport and/or maturation of PMA1. EXP1 and PSG1 probably act sequentially to promote PMA1 sorting between the ER and the Golgi, with EXP1 promoting PMA1 export from the ER to the Golgi while PSG1 has a role in PMA1 maturation or quality control in the Golgi. PSG1 might also couple PMA1 sorting and maturation in the early secretory pathway with the glycosylation machinery. Its function is as follows. PSG1 is cleaved by KEX2 in two stable peptides, PSG1-N' and PSG1-C', the former supporting a role in maturation quality control, the latter having a role in modulating vesicular trafficking. In Saccharomyces cerevisiae (strain ATCC 204508 / S288c) (Baker's yeast), this protein is PMA1 stabilization in the Golgi protein 1.